A 30-amino-acid polypeptide reads, in one-letter code: HLGVVGLGGLGHVAVXQEAIENLXADEFLI.

This sequence belongs to the zinc-containing alcohol dehydrogenase family.

In Zea mays (Maize), this protein is Unknown protein from spot 365 of 2D-PAGE of etiolated coleoptile.